Reading from the N-terminus, the 865-residue chain is Alanine--tRNA ligase (865 aa).

The Zn(2+) site is built by histidine 552, histidine 556, cysteine 654, and histidine 658.

It belongs to the class-II aminoacyl-tRNA synthetase family. Zn(2+) is required as a cofactor.

It localises to the cytoplasm. It carries out the reaction tRNA(Ala) + L-alanine + ATP = L-alanyl-tRNA(Ala) + AMP + diphosphate. Functionally, catalyzes the attachment of alanine to tRNA(Ala) in a two-step reaction: alanine is first activated by ATP to form Ala-AMP and then transferred to the acceptor end of tRNA(Ala). Also edits incorrectly charged Ser-tRNA(Ala) and Gly-tRNA(Ala) via its editing domain. This Coxiella burnetii (strain RSA 331 / Henzerling II) protein is Alanine--tRNA ligase.